A 156-amino-acid polypeptide reads, in one-letter code: Small ribosomal subunit protein uS7 (156 aa).

The protein belongs to the universal ribosomal protein uS7 family. In terms of assembly, part of the 30S ribosomal subunit. Contacts proteins S9 and S11.

One of the primary rRNA binding proteins, it binds directly to 16S rRNA where it nucleates assembly of the head domain of the 30S subunit. Is located at the subunit interface close to the decoding center, probably blocks exit of the E-site tRNA. This Dichelobacter nodosus (strain VCS1703A) protein is Small ribosomal subunit protein uS7.